A 209-amino-acid polypeptide reads, in one-letter code: A-type ATP synthase subunit D (209 aa).

Belongs to the V-ATPase D subunit family. As to quaternary structure, has multiple subunits, A(3), B(3), C, D, E, F, G, I and K(x); there may be a few other subunits as well.

It localises to the cell membrane. Its function is as follows. Component of the A-type ATP synthase that produces ATP from ADP in the presence of a proton gradient across the membrane. This is A-type ATP synthase subunit D from Methanosarcina mazei (strain ATCC BAA-159 / DSM 3647 / Goe1 / Go1 / JCM 11833 / OCM 88) (Methanosarcina frisia).